The sequence spans 450 residues: Biotin carboxylase 1 (450 aa).

Positions 1-447 (MIKKLLIANR…NTKFLETYDV (447 aa)) constitute a Biotin carboxylation domain. Residues Lys-116, Lys-158, 164–165 (GG), 200–203 (EKYI), and His-208 contribute to the ATP site. Positions 120-318 (RETMKQAGVP…LIKEQIKVAS (199 aa)) constitute an ATP-grasp domain. Lys-237 contributes to the hydrogencarbonate binding site. Glu-275 and Glu-289 together coordinate ATP. Glu-275, Glu-289, and Asn-291 together coordinate Mg(2+). Mn(2+)-binding residues include Glu-275, Glu-289, and Asn-291. Residues Arg-293, Val-296, and Arg-339 each contribute to the hydrogencarbonate site. Arg-293 is an active-site residue. Biotin is bound at residue Arg-339.

In terms of assembly, acetyl-CoA carboxylase is a heterohexamer of biotin carboxyl carrier protein, biotin carboxylase and the two subunits of carboxyl transferase in a 2:2 complex. Requires Mg(2+) as cofactor. Mn(2+) is required as a cofactor.

It catalyses the reaction N(6)-biotinyl-L-lysyl-[protein] + hydrogencarbonate + ATP = N(6)-carboxybiotinyl-L-lysyl-[protein] + ADP + phosphate + H(+). It functions in the pathway lipid metabolism; malonyl-CoA biosynthesis; malonyl-CoA from acetyl-CoA: step 1/1. In terms of biological role, this protein is a component of the acetyl coenzyme A carboxylase complex; first, biotin carboxylase catalyzes the carboxylation of the carrier protein and then the transcarboxylase transfers the carboxyl group to form malonyl-CoA. This chain is Biotin carboxylase 1 (accC1), found in Bacillus subtilis (strain 168).